We begin with the raw amino-acid sequence, 264 residues long: S-adenosylmethionine decarboxylase proenzyme (264 aa).

Serine 112 (schiff-base intermediate with substrate; via pyruvic acid) is an active-site residue. At serine 112 the chain carries Pyruvic acid (Ser); by autocatalysis. Histidine 117 functions as the Proton acceptor; for processing activity in the catalytic mechanism. Residue cysteine 140 is the Proton donor; for catalytic activity of the active site.

Belongs to the prokaryotic AdoMetDC family. Type 2 subfamily. As to quaternary structure, heterooctamer of four alpha and four beta chains arranged as a tetramer of alpha/beta heterodimers. Pyruvate serves as cofactor. Is synthesized initially as an inactive proenzyme. Formation of the active enzyme involves a self-maturation process in which the active site pyruvoyl group is generated from an internal serine residue via an autocatalytic post-translational modification. Two non-identical subunits are generated from the proenzyme in this reaction, and the pyruvate is formed at the N-terminus of the alpha chain, which is derived from the carboxyl end of the proenzyme. The post-translation cleavage follows an unusual pathway, termed non-hydrolytic serinolysis, in which the side chain hydroxyl group of the serine supplies its oxygen atom to form the C-terminus of the beta chain, while the remainder of the serine residue undergoes an oxidative deamination to produce ammonia and the pyruvoyl group blocking the N-terminus of the alpha chain.

The catalysed reaction is S-adenosyl-L-methionine + H(+) = S-adenosyl 3-(methylsulfanyl)propylamine + CO2. Its pathway is amine and polyamine biosynthesis; S-adenosylmethioninamine biosynthesis; S-adenosylmethioninamine from S-adenosyl-L-methionine: step 1/1. Functionally, catalyzes the decarboxylation of S-adenosylmethionine to S-adenosylmethioninamine (dcAdoMet), the propylamine donor required for the synthesis of the polyamines spermine and spermidine from the diamine putrescine. This chain is S-adenosylmethionine decarboxylase proenzyme, found in Salmonella typhi.